Reading from the N-terminus, the 639-residue chain is PTS-dependent dihydroxyacetone kinase operon regulatory protein (639 aa).

The sensor domain stretch occupies residues 1–318 (MSGAFNNDGR…MRQLMTSQLG (318 aa)). Positions 52 to 189 (AMLTLGQAAL…AIAREVGNLL (138 aa)) constitute a GAF domain. Residues 203-265 (NQLNALLESM…AVLQQAIKQA (63 aa)) enclose the PAS domain. The Sigma-54 factor interaction domain maps to 327 to 552 (MPQDDPQTRR…LYSVIENLAL (226 aa)). ATP contacts are provided by residues 355-362 (GEEGVGKA) and 415-424 (AHGGTLFLEK).

Homodimer. DhaR forms complexes with DhaK and DhaL-ADP.

Its function is as follows. Positively regulates the dhaKLM operon from a sigma-70 promoter. Represses its own expression. This Escherichia coli (strain K12) protein is PTS-dependent dihydroxyacetone kinase operon regulatory protein.